The primary structure comprises 642 residues: Threonine--tRNA ligase (642 aa).

The 61-residue stretch at 1-61 folds into the TGS domain; that stretch reads MPIITLPDGS…EHDASLEIIT (61 aa). The catalytic stretch occupies residues 244-535; it reads DHRKIGKQLD…LIEEYAGFFP (292 aa). Zn(2+) is bound by residues Cys-335, His-386, and His-512.

This sequence belongs to the class-II aminoacyl-tRNA synthetase family. In terms of assembly, homodimer. Requires Zn(2+) as cofactor.

The protein resides in the cytoplasm. It catalyses the reaction tRNA(Thr) + L-threonine + ATP = L-threonyl-tRNA(Thr) + AMP + diphosphate + H(+). Catalyzes the attachment of threonine to tRNA(Thr) in a two-step reaction: L-threonine is first activated by ATP to form Thr-AMP and then transferred to the acceptor end of tRNA(Thr). Also edits incorrectly charged L-seryl-tRNA(Thr). The chain is Threonine--tRNA ligase from Vibrio cholerae serotype O1 (strain ATCC 39541 / Classical Ogawa 395 / O395).